Reading from the N-terminus, the 386-residue chain is 4-hydroxy-3-methylbut-2-en-1-yl diphosphate synthase (flavodoxin) (386 aa).

[4Fe-4S] cluster-binding residues include cysteine 289, cysteine 292, cysteine 324, and glutamate 331.

Belongs to the IspG family. [4Fe-4S] cluster is required as a cofactor.

The enzyme catalyses (2E)-4-hydroxy-3-methylbut-2-enyl diphosphate + oxidized [flavodoxin] + H2O + 2 H(+) = 2-C-methyl-D-erythritol 2,4-cyclic diphosphate + reduced [flavodoxin]. The protein operates within isoprenoid biosynthesis; isopentenyl diphosphate biosynthesis via DXP pathway; isopentenyl diphosphate from 1-deoxy-D-xylulose 5-phosphate: step 5/6. Functionally, converts 2C-methyl-D-erythritol 2,4-cyclodiphosphate (ME-2,4cPP) into 1-hydroxy-2-methyl-2-(E)-butenyl 4-diphosphate. This is 4-hydroxy-3-methylbut-2-en-1-yl diphosphate synthase (flavodoxin) from Nitratidesulfovibrio vulgaris (strain ATCC 29579 / DSM 644 / CCUG 34227 / NCIMB 8303 / VKM B-1760 / Hildenborough) (Desulfovibrio vulgaris).